The sequence spans 479 residues: MNRNPDQNTLPNITLKIIETYLGRVPSVNEYHMLKLQARNIQKITVFNKDIFVSLVKKNKKRFFSDVNTSASEIKDRILSYFSKQTQTYNIGKLFTIIELQSVLVTTYTDILGVLTIKAPNVISSKISYNVTSMEELARDMLNSMNVAVIDKAKVMGRHNVSSLVKNVNKLMEEYLRRHNKSCICYGSYSLYLINPNIRYGDIDILQTNSRTFLIDLAFLIKFITGNNIILSKIPYLRNYMVIKDENDNHIIDSFNIRQDTMNVVPKIFIDNIYIVDPTFQLLNMIKMFSQIDRLEDLSKDPEKFNARMATMLEYVRYTHGIVFDGKRNNMPMKCIIDENNRIVTVTTKDYFSFKKCLVYLDENVLSSDILDLNADTSCDFESVTNSVYLIHDNIMYTYFSNTILLSDKGKVHEISARGLCAHILLYQMLTSGEYKQCLSDLLNSMMNRDKIPIYSHTERDKKPGRHGFINIEKDIIVF.

Active-site residues include Asp202 and Asp204. Asp202, Asp204, and Asp253 together coordinate Ca(2+).

Belongs to the poxviridae poly(A) polymerase catalytic subunit family. As to quaternary structure, heterodimer of a large (catalytic) subunit and a small (regulatory) subunit.

It carries out the reaction RNA(n) + ATP = RNA(n)-3'-adenine ribonucleotide + diphosphate. Its function is as follows. Polymerase that creates the 3'-poly(A) tail of mRNA's. The protein is Poly(A) polymerase catalytic subunit (OPG063) of Bos taurus (Bovine).